A 464-amino-acid chain; its full sequence is Probable multidrug resistance protein NorM (464 aa).

12 consecutive transmembrane segments (helical) span residues 13 to 32, 52 to 74, 94 to 116, 131 to 153, 160 to 182, 192 to 214, 244 to 266, 281 to 303, 315 to 337, 352 to 373, 394 to 416, and 421 to 443; these read FLQL…AVGF, ASAL…SPLV, LWLS…RLMP, YWMA…GYVA, IILP…LGYG, TGLG…AYTA, WAIA…LMGA, TIIL…VGWW, AGLV…LALF, VNAG…ALVL, LLLS…GFQL, and TGLW…QRFL.

This sequence belongs to the multi antimicrobial extrusion (MATE) (TC 2.A.66.1) family.

The protein localises to the cell inner membrane. Multidrug efflux pump. This chain is Probable multidrug resistance protein NorM (norM), found in Synechococcus sp. (strain ATCC 27144 / PCC 6301 / SAUG 1402/1) (Anacystis nidulans).